A 448-amino-acid chain; its full sequence is ATP synthase subunit b-delta (448 aa).

The segment at 1–168 (MSTFIGQLIG…GSVGAAKRPV (168 aa)) is ATP synthase subunit b. The chain crosses the membrane as a helical span at residues 4 to 24 (FIGQLIGFAVIVFLVVKYVVP). Residues 169–448 (PGGYSGMHAA…LSAAALHLPN (280 aa)) form an ATP synthase subunit delta region.

It in the N-terminal section; belongs to the ATPase B chain family. In the C-terminal section; belongs to the ATPase delta chain family. As to quaternary structure, F-type ATPases have 2 components, F(1) - the catalytic core - and F(0) - the membrane proton channel. F(1) has five subunits: alpha(3), beta(3), gamma(1), delta(1), epsilon(1). F(0) has three main subunits: a(1), b(2) and c(10-14). The alpha and beta chains form an alternating ring which encloses part of the gamma chain. F(1) is attached to F(0) by a central stalk formed by the gamma and epsilon chains, while a peripheral stalk is formed by the delta and b chains.

Its subcellular location is the cell membrane. Functionally, f(1)F(0) ATP synthase produces ATP from ADP in the presence of a proton or sodium gradient. F-type ATPases consist of two structural domains, F(1) containing the extramembraneous catalytic core and F(0) containing the membrane proton channel, linked together by a central stalk and a peripheral stalk. During catalysis, ATP synthesis in the catalytic domain of F(1) is coupled via a rotary mechanism of the central stalk subunits to proton translocation. Its function is as follows. This fusion protein includes a component of the F(0) channel (subunit b) and of the F(1) subunit (subunit delta). Two copies of subunit b and one of delta together form the peripheral 'stator' stalk which links F(1) to F(0). This chain is ATP synthase subunit b-delta (atpFH), found in Mycobacteroides abscessus (strain ATCC 19977 / DSM 44196 / CCUG 20993 / CIP 104536 / JCM 13569 / NCTC 13031 / TMC 1543 / L948) (Mycobacterium abscessus).